A 298-amino-acid polypeptide reads, in one-letter code: N-acetylmuramic acid 6-phosphate etherase (298 aa).

The region spanning 55–218 (IHTQVSGGGR…STGLMIKSGK (164 aa)) is the SIS domain. The active-site Proton donor is E83. E114 is a catalytic residue.

It belongs to the GCKR-like family. MurNAc-6-P etherase subfamily. In terms of assembly, homodimer.

It carries out the reaction N-acetyl-D-muramate 6-phosphate + H2O = N-acetyl-D-glucosamine 6-phosphate + (R)-lactate. It functions in the pathway amino-sugar metabolism; 1,6-anhydro-N-acetylmuramate degradation. The protein operates within amino-sugar metabolism; N-acetylmuramate degradation. Its pathway is cell wall biogenesis; peptidoglycan recycling. Its function is as follows. Specifically catalyzes the cleavage of the D-lactyl ether substituent of MurNAc 6-phosphate, producing GlcNAc 6-phosphate and D-lactate. Together with AnmK, is also required for the utilization of anhydro-N-acetylmuramic acid (anhMurNAc) either imported from the medium or derived from its own cell wall murein, and thus plays a role in cell wall recycling. The sequence is that of N-acetylmuramic acid 6-phosphate etherase from Escherichia coli O6:K15:H31 (strain 536 / UPEC).